We begin with the raw amino-acid sequence, 200 residues long: uncharacterized protein (200 aa).

This is an uncharacterized protein from Haemophilus phage HP1 (strain HP1c1) (Bacteriophage HP1).